A 24-amino-acid chain; its full sequence is Defensin D5 (24 aa).

This sequence belongs to the DEFL family. Group IV subfamily. Distributed in the epidermal cell layer of leaves and in the subepidermal layer region of stems. Not in roots.

The protein localises to the secreted. It localises to the cell wall. Functionally, antimicrobial peptide. Active against Fusarium spp., Gram-positive and Gram-negative bacterial pathogens. The sequence is that of Defensin D5 from Spinacia oleracea (Spinach).